We begin with the raw amino-acid sequence, 256 residues long: Ferritin-3, chloroplastic (256 aa).

Residues methionine 1 to threonine 49 constitute a chloroplast transit peptide. The extension peptide (EP) stretch occupies residues asparagine 50 to arginine 82. In terms of domain architecture, Ferritin-like diiron spans glutamine 83 to glycine 236. Positions 100, 135, 138, 184, and 218 each coordinate Fe cation.

This sequence belongs to the ferritin family. Oligomer of 24 subunits. There are two types of subunits: L (light) chain and H (heavy) chain. The major chain can be light or heavy, depending on the species and tissue type. The functional molecule forms a roughly spherical shell with a diameter of 12 nm and contains a central cavity into which the insoluble mineral iron core is deposited.

The protein resides in the plastid. It localises to the chloroplast. The catalysed reaction is 4 Fe(2+) + O2 + 4 H(+) = 4 Fe(3+) + 2 H2O. Stores iron in a soluble, non-toxic, readily available form. Important for iron homeostasis. Has ferroxidase activity. Iron is taken up in the ferrous form and deposited as ferric hydroxides after oxidation. The polypeptide is Ferritin-3, chloroplastic (Glycine max (Soybean)).